We begin with the raw amino-acid sequence, 864 residues long: Dynamin-1 (864 aa).

Residues 28–294 enclose the Dynamin-type G domain; that stretch reads DLDLPQIAVV…LTNHIRDTLP (267 aa). The interval 38-45 is G1 motif; sequence GGQSAGKS. GDP contacts are provided by Ser41, Gly43, Lys44, Ser45, Ser46, Arg59, and Gly60. The tract at residues 64–66 is G2 motif; sequence VTR. At Tyr80 the chain carries Phosphotyrosine. 3'-nitrotyrosine; alternate is present on Tyr125. The residue at position 125 (Tyr125) is a Phosphotyrosine; alternate. The interval 136 to 139 is G3 motif; it reads DLPG. The G4 motif stretch occupies residues 205–208; that stretch reads TKLD. Lys206, Asp208, Asp211, Asn236, Arg237, and Gln239 together coordinate GDP. Residues 235 to 238 form a G5 motif region; the sequence is VNRS. Phosphoserine is present on residues Ser306 and Ser347. At Tyr354 the chain carries Phosphotyrosine. Ser512 bears the Phosphoserine mark. In terms of domain architecture, PH spans 519-625; the sequence is LVIRKGWLTI…WKASFLRAGV (107 aa). The region spanning 659–750 is the GED domain; the sequence is VETIRNLVDS…IIGDINTTTV (92 aa). Residues 767–864 are disordered; that stretch reads SVPAGRRSPT…PESPRPPFDL (98 aa). Ser774 bears the Phosphoserine; by GSK3-beta mark. Ser778 carries the phosphoserine modification. Arg796 bears the Omega-N-methylarginine mark. A Phosphoserine modification is found at Ser822. Residues 825–843 show a composition bias toward pro residues; it reads PFGPPPQVPSRPNRAPPGV. Phosphoserine occurs at positions 851 and 857.

It belongs to the TRAFAC class dynamin-like GTPase superfamily. Dynamin/Fzo/YdjA family. As to quaternary structure, homodimer; homodimerization is mediated by the dynamin-type G domain which promotes assembly-stimulated GTPase activity. Homo-tetramer formed from two dimers in the absence of lipid. Oligomerizes into a helical polymer that self-assembles around the vesicle membrane, when associated to the menbrane through lipid binding. Interacts (via C-terminal proline-rich domain (PRD)) with SNX9 (via SH3 domain); this interaction allows regulation of DNM1 self-assembly during late stages of endocytic vesicle formation and supports DNM1's early functions in accelerating clathrin-coated pits (CCPs) maturation in non neuronals cell. Interacts (via C-terminal proline-rich domain (PRD)) with MYO1E (via SH3 domain); this interaction regulates receptor-mediated endocytosis. Interacts with SNX33 (via SH3 domain); this interaction decreases DNM1-dependent endocytosis. Interacts with DIAPH1. Interacts with GRB2 (via SH3 domain); this interaction mediates disassembly of DNM1 polymers, therefore modulates self-assembly. Forms a complex with BIN1 (via SH3 domain) and SH3GL2 (via SH3 domain). Forms a complex with SH3GL2 (via SH3 domain) and AMPH (via SH3 domain). Forms a complex with SH3GL2 (via SH3 domain) and SYNJ1. Interacts with AMPH. Interacts (via C-terminal proline-rich domain (PRD)) with SYT1; this interaction facilitates vesicle fission during clathrin-mediated endocytosis (CME). Interacts (via C-terminal proline-rich domain (PRD)) with PLCG1 (via SH3 domain); this interaction stimulates the release of GDP from DNM1 and enhances DNM1-dependent endocytosis. Interacts with SNPH; this interaction inhibits the binding of DNM1 to AMPH and DNM1-receptor-mediated endocytosis. Interacts with CAV1. Interacts with SH3GLB1 (via SH3 domain). Interacts with PACSIN1 (via SH3 domain), PACSIN2 (via SH3 domain) and PACSIN3 (via SH3 domain). Interacts with UNC119; this interaction decreases DNM1's GTPase activity and affects DNM1's interaction with AMPH. Interacts (GTP-bound form) with DNAJC6; this interaction allows clathrin-coated vesicle (CCV) formation at the plasma membrane. In terms of processing, phosphorylation at Ser-774 by GSK3B/GSK3-beta leads to inactivation of receptor-mediated endocytosis in non-neuronal cells. Dephosphorylation at Ser-774, through the EGFR downstream signaling, leads to activation and regulates early stages of clathrin-mediated endocytosis (CME). Phosphorylated by CDK5 leading to synaptic vesicle endocytosis (SVE) activation.

It localises to the cell membrane. Its subcellular location is the membrane. It is found in the clathrin-coated pit. The protein resides in the cytoplasmic vesicle. The protein localises to the presynapse. It localises to the secretory vesicle. Its subcellular location is the chromaffin granule. The enzyme catalyses GTP + H2O = GDP + phosphate + H(+). With respect to regulation, GTPase activity is activated by 1-phosphatidyl-1D-myo-inositol 4,5-bisphosphate. GTPase activity is inhibited by the heterodimer G protein formed by GNB1 and GNG2 with an IC(50)=400 nM when DNM1 concentration is 5 nM. Its function is as follows. Catalyzes the hydrolysis of GTP and utilizes this energy to mediate vesicle scission and participates in many forms of endocytosis, such as clathrin-mediated endocytosis or synaptic vesicle endocytosis as well as rapid endocytosis (RE). Associates to the membrane, through lipid binding, and self-assembles into rings and stacks of interconnected rings through oligomerization to form a helical polymer around the vesicle membrane leading to constriction of invaginated coated pits around their necks. Self-assembly of the helical polymer induces membrane tubules narrowing until the polymer reaches a length sufficient to trigger GTP hydrolysis. Depending on the curvature imposed on the tubules, membrane detachment from the helical polymer upon GTP hydrolysis can cause spontaneous hemifission followed by complete fission. May play a role in regulating early stages of clathrin-mediated endocytosis in non-neuronal cells through its activation by dephosphorylation via the signaling downstream of EGFR. Controls vesicle size at a step before fission, during formation of membrane pits, at hippocampal synapses. Controls plastic adaptation of the synaptic vesicle recycling machinery to high levels of activity. Mediates rapid endocytosis (RE), a Ca(2+)-dependent and clathrin- and K(+)-independent process in chromaffin cells. Microtubule-associated force-producing protein involved in producing microtubule bundles and able to bind and hydrolyze GTP. Through its interaction with DNAJC6, acts during the early steps of clathrin-coated vesicle (CCV) formation. In Homo sapiens (Human), this protein is Dynamin-1.